The sequence spans 1052 residues: Lateral signaling target protein 2 homolog (1052 aa).

Disordered stretches follow at residues 311-348, 379-455, 506-539, 551-678, and 814-973; these read YSSI…TSPH, PSML…DSDS, DEFG…STSA, LRLP…ASSF, and NTID…IPDG. Composition is skewed to low complexity over residues 312 to 346, 379 to 392, and 400 to 419; these read SSIE…STTS, PSML…TPTA, and PSHS…NPPA. Positions 422–455 are enriched in acidic residues; the sequence is SEDDDDDDEEREDDEEECGMLDSDEQDLNDDSDS. Polar residues predominate over residues 554–574; the sequence is PSSSSENEQTTGSNQQSTIKT. Serine 555 and serine 556 each carry phosphoserine. Composition is skewed to basic residues over residues 588-614 and 625-644; these read RQRH…HHQQ and SHHH…ARKR. A compositionally biased stretch (polar residues) spans 652–661; the sequence is STTAEQQQTI. Residues 824–842 are compositionally biased toward low complexity; it reads NNNNNNNNNSGSSSSSNSS. Serine 854 carries the phosphoserine modification. Residues 872 to 915 are compositionally biased toward low complexity; that stretch reads QQQQQQQAQLQLQMQRQRNNSVGSNSPSSSSSSSSSSEHNSPIS. Polar residues predominate over residues 926 to 935; it reads SNSASMPSIG. The span at 936 to 963 shows a compositional bias: low complexity; sequence STATTAAATAAATATTTTSATTTTTTTT. An FYVE-type zinc finger spans residues 972–1032; that stretch reads DGKAPRCMSC…VCRECYVREV (61 aa). Zn(2+)-binding residues include cysteine 978, cysteine 981, cysteine 994, cysteine 997, cysteine 1002, cysteine 1005, cysteine 1024, and cysteine 1027.

The protein belongs to the lst-2 family.

Its function is as follows. Negative regulator of epidermal growth factor receptor (EGFR) signaling. The protein is Lateral signaling target protein 2 homolog of Drosophila virilis (Fruit fly).